A 788-amino-acid chain; its full sequence is Pre-rRNA-processing protein TSR1 homolog (788 aa).

The interval 1–40 is disordered; sequence MSTTGHRAGVFKKPAKPHKSWKGKRTKGEITTENRGREGV. The segment covering 9-25 has biased composition (basic residues); it reads GVFKKPAKPHKSWKGKR. Over residues 26–40 the composition is skewed to basic and acidic residues; the sequence is TKGEITTENRGREGV. The Bms1-type G domain maps to 83–243; the sequence is APCLVTILSL…LRTLNETKKK (161 aa). Residues 354–433 are disordered; the sequence is LEEADKEMRR…ASEMMFHDEI (80 aa). The segment covering 378 to 412 has biased composition (acidic residues); that stretch reads DDSEDDEDEEDEDEDMDDEEEDKDLEEDDEEEDTP.

Belongs to the TRAFAC class translation factor GTPase superfamily. Bms1-like GTPase family. TSR1 subfamily.

The protein localises to the nucleus. The protein resides in the nucleolus. Its function is as follows. Required during maturation of the 40S ribosomal subunit in the nucleolus. In Caenorhabditis briggsae, this protein is Pre-rRNA-processing protein TSR1 homolog.